Reading from the N-terminus, the 144-residue chain is Pleckstrin homology-like domain family A member 2 (144 aa).

The PH domain occupies 18–111 (ILCEGELEKR…AAITMALIDF (94 aa)). Ser140 bears the Phosphoserine mark.

It belongs to the PHLDA2 family. As to expression, specifically expressed at high levels in extraembryonic tissues in the developing conceptus (at protein level). Expressed in placenta and yolc sac. Expressed at low levels in fetal liver and kidney.

The protein localises to the cytoplasm. It localises to the membrane. Functionally, plays a role in regulating placenta growth. May act via its PH domain that competes with other PH domain-containing proteins, thereby preventing their binding to membrane lipids. The sequence is that of Pleckstrin homology-like domain family A member 2 (Phlda2) from Mus musculus (Mouse).